The sequence spans 311 residues: Methionyl-tRNA formyltransferase (311 aa).

(6S)-5,6,7,8-tetrahydrofolate is bound at residue 110–113 (SLLP).

It belongs to the Fmt family.

The enzyme catalyses L-methionyl-tRNA(fMet) + (6R)-10-formyltetrahydrofolate = N-formyl-L-methionyl-tRNA(fMet) + (6S)-5,6,7,8-tetrahydrofolate + H(+). Attaches a formyl group to the free amino group of methionyl-tRNA(fMet). The formyl group appears to play a dual role in the initiator identity of N-formylmethionyl-tRNA by promoting its recognition by IF2 and preventing the misappropriation of this tRNA by the elongation apparatus. This chain is Methionyl-tRNA formyltransferase, found in Streptococcus pyogenes serotype M28 (strain MGAS6180).